The chain runs to 494 residues: UDP-N-acetylmuramate--L-alanine ligase (494 aa).

140 to 146 contributes to the ATP binding site; that stretch reads GTHGKTT.

It belongs to the MurCDEF family.

Its subcellular location is the cytoplasm. The catalysed reaction is UDP-N-acetyl-alpha-D-muramate + L-alanine + ATP = UDP-N-acetyl-alpha-D-muramoyl-L-alanine + ADP + phosphate + H(+). It functions in the pathway cell wall biogenesis; peptidoglycan biosynthesis. Cell wall formation. The polypeptide is UDP-N-acetylmuramate--L-alanine ligase (Trichormus variabilis (strain ATCC 29413 / PCC 7937) (Anabaena variabilis)).